Reading from the N-terminus, the 435-residue chain is D-amino acid dehydrogenase (435 aa).

3-17 lines the FAD pocket; sequence VIVLGGGVLGVSTAW.

It belongs to the DadA oxidoreductase family. It depends on FAD as a cofactor.

The catalysed reaction is a D-alpha-amino acid + A + H2O = a 2-oxocarboxylate + AH2 + NH4(+). It functions in the pathway amino-acid degradation; D-alanine degradation; NH(3) and pyruvate from D-alanine: step 1/1. In terms of biological role, oxidative deamination of D-amino acids. The chain is D-amino acid dehydrogenase from Chromobacterium violaceum (strain ATCC 12472 / DSM 30191 / JCM 1249 / CCUG 213 / NBRC 12614 / NCIMB 9131 / NCTC 9757 / MK).